The sequence spans 262 residues: MFEARLVQGSVLKRVLEALKDLITEACWDLGSGGISLQSMDSSHVSLVQLTLRSEGFDTYRCDRNIAMGVNLNSMSKILKCAGNEDIITLRAEDNADTLALVFEAPNQEKVSDYEMKLMDLDVEQLGIPEQEYSCVVKMPSAEFARICRDLSHIGDAVVISCAKDGVKFSANGELGNGNIKLSQTSNVDKEEEAVTIEMNEPVQLTFALRYLNFFTKATPLSPTVTLSMSADVPLVVEYKIADMGHLKYYLAPKIEDQQEGS.

Residues 61–80 (RCDRNIAMGVNLNSMSKILK) mediate DNA binding. Lysine 164 participates in a covalent cross-link: Glycyl lysine isopeptide (Lys-Gly) (interchain with G-Cter in ubiquitin).

This sequence belongs to the PCNA family. In terms of assembly, homotrimer. Forms a complex with activator 1 heteropentamer in the presence of ATP. Interacts with DNMT1. Interacts with CHAF1A. Component of the replisome complex. In terms of processing, monoubiquitinated by the UBE2B-RAD18 complex on Lys-164. Monoubiquitination at Lys-164 also takes place in undamaged proliferating cells, and is mediated by the DCX(DTL) complex, leading to enhance PCNA-dependent translesion DNA synthesis.

The protein localises to the nucleus. This protein is an auxiliary protein of DNA polymerase delta and is involved in the control of eukaryotic DNA replication by increasing the polymerase's processibility during elongation of the leading strand. The polypeptide is Proliferating cell nuclear antigen (PCNA) (Gallus gallus (Chicken)).